Consider the following 588-residue polypeptide: Schlafen family member 12-like (588 aa).

Residues 566–586 form a helical membrane-spanning segment; it reads IFLFVCLFRFCLFVCWFVCFF.

The protein belongs to the Schlafen family.

It is found in the membrane. The protein is Schlafen family member 12-like (SLFN12L) of Homo sapiens (Human).